A 143-amino-acid polypeptide reads, in one-letter code: Small ribosomal subunit protein uS9 (143 aa).

An N-acetylserine modification is found at serine 2. A disordered region spans residues 123–143 (MPEPKKFGGKGARSRYQKSYR). The segment covering 134–143 (ARSRYQKSYR) has biased composition (basic residues).

The protein belongs to the universal ribosomal protein uS9 family.

In Maudiozyma exigua (Yeast), this protein is Small ribosomal subunit protein uS9 (RPS16).